The following is an 880-amino-acid chain: MADTTVEKLATEVGKSVERLIEQFSQAGIKKGQADNVSEAEKQQLLDYLKKQHGADSAPTKMTLQRKTVSTLSVAGNGGQSKDVKVEVRKTRTFVKRDVNDTVLKAEEEAKAEAEALAKAKAEAEAAQAAKAKAEAEAKAKAEAEAKAKAKAAAEVKVTKESSPEVEAARLEAERLKAAQEAATKRKQDEEAAKAAEKARLLAEENSKRWAEEERQRLEAERNGDHHITTSKVARAAEDTSDLDEEKRGRRARNKSNAKKRGGKDARDGREKHMRNRSTAPESMAHGFNKPVAAVSRDVRIGETVTVSELAHLMAVKATEIIKQMMKMGSMVTINQVLDQETAQLVAEEMGHKVVLIRENELEHQVLQDRDDEDGIKLESRAPVVTIMGHVDHGKTSLLDYIRRAKVAAGEAGGITQHIGAYHVETENGMITFLDTPGHAAFTAMRARGAKATDIVVLVVAADDGVMPQTIEAIQHAKAGNVPLIVAVNKMDKPEADIDRVKSELSQHGVMSEDWGGDNMFAFVSAKTGEGVDDLLEGILLQAEVLELKAVRDGMAAGVVIESQLDKGRGPVATILVQEGTLRQGDIVLCGLEYGKIRAMKDENGRSITEAGPSIPVEILGLSGVPSAGDEATVVRDERKAREVALYRQGKFRDVKLARQQKSKLENMFANMTDGEVKELNIVLKADVQGSLEAITDSLTGLSTDEVKVNIIARGVGALTETDATLAAASNAIMVGFNVRADAQARKVIESESVDLRYYSVIYNLIDEVKAAMTGMLSPEFKQQIIGLAEVRDVFKSPKLGAIAGCMVTEGTIKRSAPIRVLRDNVVIFEGELESLRRFKDDVAEVRNGMECGIGVKNYNDVRVGDQIEVFETVEVARTL.

The span at 143-228 shows a compositional bias: basic and acidic residues; the sequence is EAEAKAKAKA…EAERNGDHHI (86 aa). The segment at 143-289 is disordered; that stretch reads EAEAKAKAKA…APESMAHGFN (147 aa). Positions 249–262 are enriched in basic residues; the sequence is GRRARNKSNAKKRG. In terms of domain architecture, tr-type G spans 380–549; the sequence is SRAPVVTIMG…LLQAEVLELK (170 aa). A G1 region spans residues 389–396; it reads GHVDHGKT. Residue 389–396 coordinates GTP; the sequence is GHVDHGKT. A G2 region spans residues 414–418; that stretch reads GITQH. Positions 435–438 are G3; sequence DTPG. Residues 435-439 and 489-492 contribute to the GTP site; these read DTPGH and NKMD. Positions 489 to 492 are G4; that stretch reads NKMD. Positions 525–527 are G5; the sequence is SAK.

The protein belongs to the TRAFAC class translation factor GTPase superfamily. Classic translation factor GTPase family. IF-2 subfamily.

The protein localises to the cytoplasm. Its function is as follows. One of the essential components for the initiation of protein synthesis. Protects formylmethionyl-tRNA from spontaneous hydrolysis and promotes its binding to the 30S ribosomal subunits. Also involved in the hydrolysis of GTP during the formation of the 70S ribosomal complex. The protein is Translation initiation factor IF-2 of Shewanella putrefaciens (strain CN-32 / ATCC BAA-453).